We begin with the raw amino-acid sequence, 249 residues long: 1-(5-phosphoribosyl)-5-[(5-phosphoribosylamino)methylideneamino] imidazole-4-carboxamide isomerase (249 aa).

D8 functions as the Proton acceptor in the catalytic mechanism. Residue D129 is the Proton donor of the active site.

The protein belongs to the HisA/HisF family.

Its subcellular location is the cytoplasm. It catalyses the reaction 1-(5-phospho-beta-D-ribosyl)-5-[(5-phospho-beta-D-ribosylamino)methylideneamino]imidazole-4-carboxamide = 5-[(5-phospho-1-deoxy-D-ribulos-1-ylimino)methylamino]-1-(5-phospho-beta-D-ribosyl)imidazole-4-carboxamide. It participates in amino-acid biosynthesis; L-histidine biosynthesis; L-histidine from 5-phospho-alpha-D-ribose 1-diphosphate: step 4/9. This chain is 1-(5-phosphoribosyl)-5-[(5-phosphoribosylamino)methylideneamino] imidazole-4-carboxamide isomerase, found in Rhizobium rhizogenes (strain K84 / ATCC BAA-868) (Agrobacterium radiobacter).